Consider the following 158-residue polypeptide: 6,7-dimethyl-8-ribityllumazine synthase (158 aa).

5-amino-6-(D-ribitylamino)uracil-binding positions include Phe22, 57 to 59 (AVE), and 81 to 83 (AVI). 86-87 (GT) contributes to the (2S)-2-hydroxy-3-oxobutyl phosphate binding site. The active-site Proton donor is His89. Phe114 provides a ligand contact to 5-amino-6-(D-ribitylamino)uracil. Arg128 serves as a coordination point for (2S)-2-hydroxy-3-oxobutyl phosphate.

It belongs to the DMRL synthase family. Forms an icosahedral capsid composed of 60 subunits, arranged as a dodecamer of pentamers.

It carries out the reaction (2S)-2-hydroxy-3-oxobutyl phosphate + 5-amino-6-(D-ribitylamino)uracil = 6,7-dimethyl-8-(1-D-ribityl)lumazine + phosphate + 2 H2O + H(+). The protein operates within cofactor biosynthesis; riboflavin biosynthesis; riboflavin from 2-hydroxy-3-oxobutyl phosphate and 5-amino-6-(D-ribitylamino)uracil: step 1/2. Catalyzes the formation of 6,7-dimethyl-8-ribityllumazine by condensation of 5-amino-6-(D-ribitylamino)uracil with 3,4-dihydroxy-2-butanone 4-phosphate. This is the penultimate step in the biosynthesis of riboflavin. This is 6,7-dimethyl-8-ribityllumazine synthase from Shewanella frigidimarina (strain NCIMB 400).